A 93-amino-acid chain; its full sequence is Pyrimidine/purine nucleoside phosphorylase (93 aa).

This sequence belongs to the nucleoside phosphorylase PpnP family.

It carries out the reaction a purine D-ribonucleoside + phosphate = a purine nucleobase + alpha-D-ribose 1-phosphate. The catalysed reaction is adenosine + phosphate = alpha-D-ribose 1-phosphate + adenine. The enzyme catalyses cytidine + phosphate = cytosine + alpha-D-ribose 1-phosphate. It catalyses the reaction guanosine + phosphate = alpha-D-ribose 1-phosphate + guanine. It carries out the reaction inosine + phosphate = alpha-D-ribose 1-phosphate + hypoxanthine. The catalysed reaction is thymidine + phosphate = 2-deoxy-alpha-D-ribose 1-phosphate + thymine. The enzyme catalyses uridine + phosphate = alpha-D-ribose 1-phosphate + uracil. It catalyses the reaction xanthosine + phosphate = alpha-D-ribose 1-phosphate + xanthine. Catalyzes the phosphorolysis of diverse nucleosides, yielding D-ribose 1-phosphate and the respective free bases. Can use uridine, adenosine, guanosine, cytidine, thymidine, inosine and xanthosine as substrates. Also catalyzes the reverse reactions. This Vibrio atlanticus (strain LGP32) (Vibrio splendidus (strain Mel32)) protein is Pyrimidine/purine nucleoside phosphorylase.